We begin with the raw amino-acid sequence, 358 residues long: Gap junction alpha-5 protein (358 aa).

Over 1–19 (MGDWSFLGEFLEEVHKHST) the chain is Cytoplasmic. The helical transmembrane segment at 20-40 (VIGKVWLTVLFIFRMLVLGTA) threads the bilayer. At 41–76 (AESSWGDEQADFQCDTMQPGCGNVCYDQAFPISHIR) the chain is on the extracellular side. The chain crosses the membrane as a helical span at residues 77–97 (YWVLQIIFVSTPSLVYMGHAM). At 98-164 (HTVRMQEKRK…CSILIRTTME (67 aa)) the chain is on the cytoplasmic side. The helical transmembrane segment at 165–185 (VAFIVGQYLLYGIFLDTLHVC) threads the bilayer. Topologically, residues 186–205 (RRSPCPHPVNCYVSRPTEKN) are extracellular. A helical transmembrane segment spans residues 206-226 (VFIVFMLAVAALSLFLSLAEL). Residues 227-358 (YHLGWKKLRQ…SKARSDDLSV (132 aa)) lie on the Cytoplasmic side of the membrane. The tract at residues 318–358 (AQKPEVPNGASPGHRLPHGYQSDKRRLSKASSKARSDDLSV) is disordered. Phosphoserine is present on residues Ser353 and Ser357.

The protein belongs to the connexin family. Alpha-type (group II) subfamily. A connexon is composed of a hexamer of connexins.

It localises to the cell membrane. The protein resides in the cell junction. It is found in the gap junction. One gap junction consists of a cluster of closely packed pairs of transmembrane channels, the connexons, through which materials of low MW diffuse from one cell to a neighboring cell. The protein is Gap junction alpha-5 protein (GJA5) of Canis lupus familiaris (Dog).